Consider the following 524-residue polypeptide: Cytochrome P450 4F12 (524 aa).

The next 2 helical transmembrane spans lie at 19-39 (WLLL…AWTY) and 87-107 (GFTV…PDTI). C468 serves as a coordination point for heme.

Belongs to the cytochrome P450 family. The cofactor is heme. Expressed in small intestine, liver, colon and heart.

Its subcellular location is the endoplasmic reticulum membrane. The protein localises to the microsome membrane. It catalyses the reaction an organic molecule + reduced [NADPH--hemoprotein reductase] + O2 = an alcohol + oxidized [NADPH--hemoprotein reductase] + H2O + H(+). The catalysed reaction is (5Z,8Z,11Z,14Z)-eicosatetraenoate + reduced [NADPH--hemoprotein reductase] + O2 = 18-hydroxy-(5Z,8Z,11Z,14Z)-eicosatetraenoate + oxidized [NADPH--hemoprotein reductase] + H2O + H(+). It carries out the reaction (7Z,10Z,13Z,16Z,19Z)-docosapentaenoate + reduced [NADPH--hemoprotein reductase] + O2 = 10,11-epoxy-(7Z,13Z,16Z,19Z)-docosatetraenoate + oxidized [NADPH--hemoprotein reductase] + H2O + H(+). The enzyme catalyses (7Z,10Z,13Z,16Z,19Z)-docosapentaenoate + reduced [NADPH--hemoprotein reductase] + O2 = 13,14-epoxy-(7Z,10Z,16Z,19Z)-docosatetraenoate + oxidized [NADPH--hemoprotein reductase] + H2O + H(+). It catalyses the reaction (7Z,10Z,13Z,16Z,19Z)-docosapentaenoate + reduced [NADPH--hemoprotein reductase] + O2 = 16,17-epoxy-(7Z,10Z,13Z,19Z)-docosatetraenoate + oxidized [NADPH--hemoprotein reductase] + H2O + H(+). The catalysed reaction is (7Z,10Z,13Z,16Z,19Z)-docosapentaenoate + reduced [NADPH--hemoprotein reductase] + O2 = 19,20-epoxy-(7Z,10Z,13Z,16Z)-docosatetraenoate + oxidized [NADPH--hemoprotein reductase] + H2O + H(+). It carries out the reaction (4Z,7Z,10Z,13Z,16Z,19Z)-docosahexaenoate + reduced [NADPH--hemoprotein reductase] + O2 = 10,11-epoxy-(4Z,7Z,13Z,16Z,19Z)-docosapentaenoate + oxidized [NADPH--hemoprotein reductase] + H2O + H(+). The enzyme catalyses (4Z,7Z,10Z,13Z,16Z,19Z)-docosahexaenoate + reduced [NADPH--hemoprotein reductase] + O2 = 13,14-epoxy-(4Z,7Z,10Z,16Z,19Z)-docosapentaenoate + oxidized [NADPH--hemoprotein reductase] + H2O + H(+). It catalyses the reaction (4Z,7Z,10Z,13Z,16Z,19Z)-docosahexaenoate + reduced [NADPH--hemoprotein reductase] + O2 = 16,17-epoxy-(4Z,7Z,10Z,13Z,19Z)-docosapentaenoate + oxidized [NADPH--hemoprotein reductase] + H2O + H(+). The catalysed reaction is (4Z,7Z,10Z,13Z,16Z,19Z)-docosahexaenoate + reduced [NADPH--hemoprotein reductase] + O2 = 19,20-epoxy-(4Z,7Z,10Z,13Z,16Z)-docosapentaenoate + oxidized [NADPH--hemoprotein reductase] + H2O + H(+). It participates in lipid metabolism; arachidonate metabolism. Functionally, a cytochrome P450 monooxygenase involved in the metabolism of endogenous polyunsaturated fatty acids (PUFAs). Mechanistically, uses molecular oxygen inserting one oxygen atom into a substrate, and reducing the second into a water molecule, with two electrons provided by NADPH via cytochrome P450 reductase (CPR; NADPH-ferrihemoprotein reductase). Catalyzes the hydroxylation of carbon hydrogen bonds, with preference for omega-2 position. Metabolizes (5Z,8Z,11Z,14Z)-eicosatetraenoic acid (arachidonate) toward 18-hydroxy arachidonate. Catalyzes the epoxidation of double bonds of PUFAs such as docosapentaenoic and docosahexaenoic acids. Has low omega-hydroxylase activity toward leukotriene B4 and arachidonate. Involved in the metabolism of xenobiotics. Catalyzes the hydroxylation of the antihistamine drug ebastine. This chain is Cytochrome P450 4F12, found in Homo sapiens (Human).